Here is a 459-residue protein sequence, read N- to C-terminus: Nuclear distribution protein PAC1-2 (459 aa).

Positions 56–83 (TSIVRLQKKIMDLESRNAALQTELANLT) form a coiled coil. 8 WD repeats span residues 108–149 (SHRD…RTVK), 151–191 (HTRA…KNIR), 195–244 (GHDH…KTLR), 246–284 (HTAW…SDHK), 306–348 (QYLA…LGTL), 350–389 (GHDN…KCVK), 394–438 (AHER…DTPD), and 440–459 (QVRC…VFAD).

It belongs to the WD repeat LIS1/nudF family. As to quaternary structure, self-associates. Interacts with NDL1 and dynein.

It is found in the cytoplasm. The protein resides in the cytoskeleton. It localises to the spindle pole. Functionally, positively regulates the activity of the minus-end directed microtubule motor protein dynein. May enhance dynein-mediated microtubule sliding by targeting dynein to the microtubule plus end. Required for nuclear migration during vegetative growth as well as development. Required for retrograde early endosome (EE) transport from the hyphal tip. Required for localization of dynein to the mitotic spindle poles. Recruits additional proteins to the dynein complex at SPBs. In Uncinocarpus reesii (strain UAMH 1704), this protein is Nuclear distribution protein PAC1-2.